The sequence spans 272 residues: ATP synthase subunit a (272 aa).

5 helical membrane passes run 41-61 (TLNI…LALF), 102-122 (IAPL…MDLV), 147-167 (DVNI…FYSI), 212-232 (LFGN…LLPW), and 243-263 (AIFH…LTIV).

The protein belongs to the ATPase A chain family. F-type ATPases have 2 components, CF(1) - the catalytic core - and CF(0) - the membrane proton channel. CF(1) has five subunits: alpha(3), beta(3), gamma(1), delta(1), epsilon(1). CF(0) has three main subunits: a(1), b(2) and c(9-12). The alpha and beta chains form an alternating ring which encloses part of the gamma chain. CF(1) is attached to CF(0) by a central stalk formed by the gamma and epsilon chains, while a peripheral stalk is formed by the delta and b chains.

It localises to the cell inner membrane. Key component of the proton channel; it plays a direct role in the translocation of protons across the membrane. This Edwardsiella ictaluri (strain 93-146) protein is ATP synthase subunit a.